Here is a 136-residue protein sequence, read N- to C-terminus: Phospholipase A2 (136 aa).

Ca(2+)-binding residues include W8, G10, and G12. Cystine bridges form between C9/C31, C30/C70, C37/C63, C61/C95, and C105/C117. N-linked (GlcNAc...) asparagine glycosylation is present at N16. The active site involves H34. Residue D35 participates in Ca(2+) binding. The active site involves D64.

It belongs to the phospholipase A2 family. It depends on Ca(2+) as a cofactor. Expressed by the venom gland.

It localises to the secreted. The enzyme catalyses a 1,2-diacyl-sn-glycero-3-phosphocholine + H2O = a 1-acyl-sn-glycero-3-phosphocholine + a fatty acid + H(+). PLA2 catalyzes the calcium-dependent hydrolysis of the 2-acyl groups in 3-sn-phosphoglycerides. The protein is Phospholipase A2 of Bombus terrestris (Buff-tailed bumblebee).